Consider the following 119-residue polypeptide: Large ribosomal subunit protein bL20 (119 aa).

This sequence belongs to the bacterial ribosomal protein bL20 family.

Its function is as follows. Binds directly to 23S ribosomal RNA and is necessary for the in vitro assembly process of the 50S ribosomal subunit. It is not involved in the protein synthesizing functions of that subunit. This chain is Large ribosomal subunit protein bL20, found in Bradyrhizobium diazoefficiens (strain JCM 10833 / BCRC 13528 / IAM 13628 / NBRC 14792 / USDA 110).